Reading from the N-terminus, the 397-residue chain is Succinate--CoA ligase [ADP-forming] subunit beta (397 aa).

The region spanning 9–254 (KALLKGYGAP…ETEEDAKEIE (246 aa)) is the ATP-grasp domain. ATP contacts are provided by residues Lys46, 53-55 (GRG), Glu109, Ala112, and Glu117. Mg(2+) is bound by residues Asn209 and Asp223. Substrate-binding positions include Asn274 and 331–333 (GIM).

It belongs to the succinate/malate CoA ligase beta subunit family. As to quaternary structure, heterotetramer of two alpha and two beta subunits. Mg(2+) serves as cofactor.

The enzyme catalyses succinate + ATP + CoA = succinyl-CoA + ADP + phosphate. It catalyses the reaction GTP + succinate + CoA = succinyl-CoA + GDP + phosphate. Its pathway is carbohydrate metabolism; tricarboxylic acid cycle; succinate from succinyl-CoA (ligase route): step 1/1. Succinyl-CoA synthetase functions in the citric acid cycle (TCA), coupling the hydrolysis of succinyl-CoA to the synthesis of either ATP or GTP and thus represents the only step of substrate-level phosphorylation in the TCA. The beta subunit provides nucleotide specificity of the enzyme and binds the substrate succinate, while the binding sites for coenzyme A and phosphate are found in the alpha subunit. The sequence is that of Succinate--CoA ligase [ADP-forming] subunit beta from Agrobacterium fabrum (strain C58 / ATCC 33970) (Agrobacterium tumefaciens (strain C58)).